The primary structure comprises 261 residues: Short-chain-enoyl-CoA hydratase (261 aa).

Glu-114 (nucleophile) is an active-site residue. The Proton acceptor role is filled by Glu-134.

This sequence belongs to the enoyl-CoA hydratase/isomerase family. Homotetramer.

The catalysed reaction is a short-chain (3S)-3-hydroxyacyl-CoA = a short-chain (2E)-enoyl-CoA + H2O. It participates in lipid metabolism; butanoate metabolism. In terms of biological role, catalyzes the reversible hydration of crotonyl-CoA. Can also use hexenoyl-CoA but not higher analogs. The chain is Short-chain-enoyl-CoA hydratase (crt) from Clostridium acetobutylicum (strain ATCC 824 / DSM 792 / JCM 1419 / IAM 19013 / LMG 5710 / NBRC 13948 / NRRL B-527 / VKM B-1787 / 2291 / W).